Consider the following 230-residue polypeptide: MTKTTTCLYHFVVLNWYIFLNYYIPQIGKDEEKLKEFHDGGRSKYLTLLNLLLQAVFFGVACLDDVLKRVIGRKDIKFITYFRDLLFTTLAFPLSTFVFLVFWSLFHYDRSLVYPKGLDDFFPAWVNHAMHTSIFPFSLAETVLRPHNYPSKKLGLSLLGACNFAYIIRILWRYVQTGNWVYPVFASLSPLGIILFFSASYILSASLYLFGEKINHWKWGATVKPRMKKN.

Residues 1-7 are Cytoplasmic-facing; it reads MTKTTTC. A helical membrane pass occupies residues 8–28; the sequence is LYHFVVLNWYIFLNYYIPQIG. Residues 29–45 lie on the Extracellular side of the membrane; that stretch reads KDEEKLKEFHDGGRSKY. The chain crosses the membrane as a helical span at residues 46-66; that stretch reads LTLLNLLLQAVFFGVACLDDV. Topologically, residues 67 to 85 are cytoplasmic; it reads LKRVIGRKDIKFITYFRDL. A helical membrane pass occupies residues 86-106; sequence LFTTLAFPLSTFVFLVFWSLF. Topologically, residues 107–120 are extracellular; the sequence is HYDRSLVYPKGLDD. The helical transmembrane segment at 121 to 141 threads the bilayer; it reads FFPAWVNHAMHTSIFPFSLAE. The Cytoplasmic segment spans residues 142-155; it reads TVLRPHNYPSKKLG. Residues 156-173 traverse the membrane as a helical segment; it reads LSLLGACNFAYIIRILWR. Residues 174-190 lie on the Extracellular side of the membrane; the sequence is YVQTGNWVYPVFASLSP. A helical membrane pass occupies residues 191–211; that stretch reads LGIILFFSASYILSASLYLFG. Residues 212-230 lie on the Cytoplasmic side of the membrane; that stretch reads EKINHWKWGATVKPRMKKN.

This sequence belongs to the AIG1 family.

It localises to the cell membrane. It catalyses the reaction 9-hexadecanoyloxy-octadecanoate + H2O = 9-hydroxy-octadecanoate + hexadecanoate + H(+). The catalysed reaction is 12-hexadecanoyloxy-octadecanoate + H2O = 12-hydroxyoctadecanoate + hexadecanoate + H(+). The enzyme catalyses 9-(9Z-hexadecenoyloxy)-octadecanoate + H2O = (9Z)-hexadecenoate + 9-hydroxy-octadecanoate + H(+). It carries out the reaction 12-(9Z-hexadecenoyloxy)-octadecanoate + H2O = 12-hydroxyoctadecanoate + (9Z)-hexadecenoate + H(+). It catalyses the reaction 13-(9Z-hexadecenoyloxy)-octadecanoate + H2O = 13-hydroxy-octadecanoate + (9Z)-hexadecenoate + H(+). The catalysed reaction is 9-octadecanoyloxy-octadecanoate + H2O = 9-hydroxy-octadecanoate + octadecanoate + H(+). The enzyme catalyses 12-octadecanoyloxy-octadecanoate + H2O = 12-hydroxyoctadecanoate + octadecanoate + H(+). It carries out the reaction 13-octadecanoyloxy-octadecanoate + H2O = 13-hydroxy-octadecanoate + octadecanoate + H(+). It catalyses the reaction 9-(9Z-octadecenoyloxy)-octadecanoate + H2O = 9-hydroxy-octadecanoate + (9Z)-octadecenoate + H(+). The catalysed reaction is 12-(9Z-octadecenoyloxy)-octadecanoate + H2O = 12-hydroxyoctadecanoate + (9Z)-octadecenoate + H(+). The enzyme catalyses 13-(9Z-octadecenoyloxy)-octadecanoate + H2O = 13-hydroxy-octadecanoate + (9Z)-octadecenoate + H(+). It carries out the reaction 5-(9Z-octadecenoyloxy)-octadecanoate + H2O = 5-hydroxy-octadecanoate + (9Z)-octadecenoate + H(+). In terms of biological role, hydrolyzes bioactive fatty-acid esters of hydroxy-fatty acids (FAHFAs), but not other major classes of lipids. Shows a preference for FAHFAs with branching distal from the carboxylate head group of the lipids. Regulates the expression and the cell-associated anticoagulant activity of the inhibitor TFPI in endothelial cells (in vitro). The sequence is that of Androgen-dependent TFPI-regulating protein (Adtrp) from Rattus norvegicus (Rat).